The primary structure comprises 448 residues: StAR-related lipid transfer protein 3 (448 aa).

The region spanning 47–219 is the MENTAL domain; the sequence is FSDVRRTFCL…YSPPESLAGS (173 aa). Transmembrane regions (helical) follow at residues 53 to 73, 96 to 116, 122 to 142, and 150 to 170; these read TFCLFVTFDLLFITLLWIIEL, FFDIFLLAVFRFLCLQLGYAA, WWVIAITTLVTTAFLIAKVIL, and AFGYVLPITSFVVAWLETWFL. Positions 208–214 match the FFAT motif; the sequence is QFYSPPE. Residues 232–445 form the START domain; that stretch reads AVTEQEKAFV…LRQRINEVHV (214 aa).

This sequence belongs to the STARD3 family. Homodimer. Post-translationally, phosphorylated. Phosphorylation allows the tethering of two membranes that participates in the formation of ER-endosome contacts. Phosphorylation of FFAT motif drives membrane tethering between the endoplasmic reticulum and late endosomes that in turn allows the efficient transport of sterol mediated by the START domain.

The protein localises to the late endosome membrane. The enzyme catalyses cholesterol(in) = cholesterol(out). Sterol-binding protein that mediates cholesterol transport from the endoplasmic reticulum to endosomes. The sterol transport mechanism is triggered by phosphorylation of FFAT motif that leads to membrane tethering between the endoplasmic reticulum and late endosomes. Acts as a lipid transfer protein that redirects sterol to the endosome at the expense of the cell membrane and favors membrane formation inside endosomes. This chain is StAR-related lipid transfer protein 3, found in Danio rerio (Zebrafish).